Here is a 216-residue protein sequence, read N- to C-terminus: Chloramphenicol acetyltransferase (216 aa).

Residue His-189 is the Proton acceptor of the active site.

It belongs to the chloramphenicol acetyltransferase family. In terms of assembly, homotrimer.

The catalysed reaction is chloramphenicol + acetyl-CoA = chloramphenicol 3-acetate + CoA. In terms of biological role, this enzyme is an effector of chloramphenicol resistance in bacteria. The chain is Chloramphenicol acetyltransferase (cat) from Staphylococcus aureus.